The following is a 202-amino-acid chain: MIVKICGLKKAVDVAAAVDNGADMIGFVFAKSKRQVTVEKAHELAKNIPANVKKVGVFVNPTEEELMAAIKGVPLDIVQLHGQEPAKQANRTDAEVIKAFPVKDGKIPTNINDYPNAYILLDAPAEEYEGGSGKTFDWDKINRDMLTKNKLIIAGGLNAQNVQEAIKRFEPYAVDISSGVETNGEKDPEKIKCFIKTAKGVE.

The protein belongs to the TrpF family.

The catalysed reaction is N-(5-phospho-beta-D-ribosyl)anthranilate = 1-(2-carboxyphenylamino)-1-deoxy-D-ribulose 5-phosphate. Its pathway is amino-acid biosynthesis; L-tryptophan biosynthesis; L-tryptophan from chorismate: step 3/5. In Listeria monocytogenes serotype 4a (strain HCC23), this protein is N-(5'-phosphoribosyl)anthranilate isomerase.